The primary structure comprises 179 residues: ATP synthase subunit delta (179 aa).

Belongs to the ATPase delta chain family. As to quaternary structure, F-type ATPases have 2 components, F(1) - the catalytic core - and F(0) - the membrane proton channel. F(1) has five subunits: alpha(3), beta(3), gamma(1), delta(1), epsilon(1). F(0) has three main subunits: a(1), b(2) and c(10-14). The alpha and beta chains form an alternating ring which encloses part of the gamma chain. F(1) is attached to F(0) by a central stalk formed by the gamma and epsilon chains, while a peripheral stalk is formed by the delta and b chains.

Its subcellular location is the cell inner membrane. F(1)F(0) ATP synthase produces ATP from ADP in the presence of a proton or sodium gradient. F-type ATPases consist of two structural domains, F(1) containing the extramembraneous catalytic core and F(0) containing the membrane proton channel, linked together by a central stalk and a peripheral stalk. During catalysis, ATP synthesis in the catalytic domain of F(1) is coupled via a rotary mechanism of the central stalk subunits to proton translocation. Functionally, this protein is part of the stalk that links CF(0) to CF(1). It either transmits conformational changes from CF(0) to CF(1) or is implicated in proton conduction. The protein is ATP synthase subunit delta of Burkholderia ambifaria (strain ATCC BAA-244 / DSM 16087 / CCUG 44356 / LMG 19182 / AMMD) (Burkholderia cepacia (strain AMMD)).